The sequence spans 471 residues: N(6)-adenine-specific methyltransferase METTL4 (471 aa).

The protein belongs to the MT-A70-like family.

It is found in the nucleus. The catalysed reaction is a 2'-O-methyladenosine in U2 snRNA + S-adenosyl-L-methionine = an N(6)-methyl-2'-O-methyladenosine in U2 snRNA + S-adenosyl-L-homocysteine + H(+). It carries out the reaction a 2'-deoxyadenosine in DNA + S-adenosyl-L-methionine = an N(6)-methyl-2'-deoxyadenosine in DNA + S-adenosyl-L-homocysteine + H(+). In terms of biological role, n(6)-adenine-specific methyltransferase that can methylate both RNAs and DNA. Acts as a N(6)-adenine-specific RNA methyltransferase by catalyzing formation of N6,2'-O-dimethyladenosine (m6A(m)) on internal positions of U2 small nuclear RNA (snRNA): methylates the 6th position of adenine residues with a pre-deposited 2'-O-methylation. Internal m6A(m) methylation of snRNAs regulates RNA splicing. Also able to act as a N(6)-adenine-specific DNA methyltransferase by mediating methylation of DNA on the 6th position of adenine (N(6)-methyladenosine). The existence of N(6)-methyladenosine (m6A) on DNA is however unclear in mammals, and additional evidences are required to confirm the role of the N(6)-adenine-specific DNA methyltransferase activity of METTL4 in vivo. Acts as a regulator of mitochondrial transcript levels and mitochondrial DNA (mtDNA) copy number by mediating mtDNA N(6)-methylation: m6A on mtDNA reduces transcription by repressing TFAM DNA-binding and bending. N(6)-methyladenosine deposition by METTL4 regulates Polycomb silencing by triggering ubiquitination and degradation of sensor proteins ASXL1 and MPND, leading to inactivation of the PR-DUB complex and subsequent preservation of Polycomb silencing. In Mus musculus (Mouse), this protein is N(6)-adenine-specific methyltransferase METTL4.